Consider the following 484-residue polypeptide: ATP synthase subunit beta (484 aa).

ATP is bound at residue 169 to 176; the sequence is GGAGVGKT.

This sequence belongs to the ATPase alpha/beta chains family. As to quaternary structure, F-type ATPases have 2 components, CF(1) - the catalytic core - and CF(0) - the membrane proton channel. CF(1) has five subunits: alpha(3), beta(3), gamma(1), delta(1), epsilon(1). CF(0) has three main subunits: a(1), b(2) and c(9-12). The alpha and beta chains form an alternating ring which encloses part of the gamma chain. CF(1) is attached to CF(0) by a central stalk formed by the gamma and epsilon chains, while a peripheral stalk is formed by the delta and b chains.

The protein resides in the cell membrane. It carries out the reaction ATP + H2O + 4 H(+)(in) = ADP + phosphate + 5 H(+)(out). Produces ATP from ADP in the presence of a proton gradient across the membrane. The catalytic sites are hosted primarily by the beta subunits. The chain is ATP synthase subunit beta from Cutibacterium acnes (strain DSM 16379 / KPA171202) (Propionibacterium acnes).